The following is a 582-amino-acid chain: Protein LYRIC (582 aa).

At 1-48 (MAARSWQDELAQQAEEGSARLREMLSVGLGFLRTELGLDLGLEPKRYP) the chain is on the lumenal side. The activation of NF-kappa-B stretch occupies residues 1 to 71 (MAARSWQDEL…LLLFLLGYGW (71 aa)). The chain crosses the membrane as a helical span at residues 49–69 (GWVILVGTGALGLLLLFLLGY). At 70-582 (GWAAACAGAR…KKKKKARRET (513 aa)) the chain is on the cytoplasmic side. The interval 72 to 169 (AAACAGARKK…EKSKKNKKKS (98 aa)) is interaction with BCCIP. The tract at residues 78 to 222 (ARKKRRSPPR…DSGSLDSTIP (145 aa)) is disordered. Low complexity predominate over residues 93–106 (AAVPAAAPDDLALL). The tract at residues 101–205 (DDLALLKNLR…ISHREKRQQR (105 aa)) is interaction with RELA. A compositionally biased stretch (basic and acidic residues) spans 109 to 127 (LRSEEQKKKNRKKLSEKPK). Position 143 is a phosphothreonine (Thr143). Basic residues predominate over residues 160-169 (EKSKKNKKKS). Ser180 carries the phosphoserine modification. The span at 198–208 (HREKRQQRKRD) shows a compositional bias: basic residues. 2 positions are modified to phosphoserine: Ser216 and Ser251. Residue Lys264 is modified to N6-acetyllysine. The interval 280 to 582 (TVNGGGWNEK…KKKKKARRET (303 aa)) is disordered. Residues Ser298, Ser306, Ser308, Ser311, Ser323, Ser339, Ser344, and Ser369 each carry the phosphoserine modification. A compositionally biased stretch (polar residues) spans 320 to 333 (SAWSQDTGDANTNG). Polar residues-rich tracts occupy residues 354 to 372 (EPVS…SRNQ) and 383 to 394 (NGLSSADPNSDW). The tract at residues 381–443 (GLNGLSSADP…EGALPTGKSK (63 aa)) is lung-homing for mammary tumors. Phosphoserine occurs at positions 415 and 426. A compositionally biased stretch (basic and acidic residues) spans 421-434 (DDQKVSDDDKEKGE). Over residues 441–451 (KSKKKKKKKKK) the composition is skewed to basic residues. At Ser457 the chain carries Phosphoserine. Thr458 is subject to Phosphothreonine. Ser478, Ser494, and Ser496 each carry phosphoserine. 2 stretches are compositionally biased toward polar residues: residues 504–520 (KNSQ…STEP) and 549–568 (NTKQ…SWES). Residue Ser568 is modified to Phosphoserine. Residues 571 to 582 (QIKKKKKARRET) are compositionally biased toward basic residues.

In terms of assembly, interacts with BCCIP, CREBBP/CBP and RELA/p65. In terms of tissue distribution, widely expressed with highest levels in muscle-dominating organs such as skeletal muscle, heart, tongue and small intestine and in endocrine glands such as thyroid and adrenal gland. Overexpressed in various cancers including breast, brain, prostate, melanoma and glioblastoma multiforme.

It is found in the endoplasmic reticulum membrane. The protein localises to the nucleus membrane. The protein resides in the cell junction. Its subcellular location is the tight junction. It localises to the nucleus. It is found in the nucleolus. The protein localises to the cytoplasm. The protein resides in the perinuclear region. Functionally, down-regulates SLC1A2/EAAT2 promoter activity when expressed ectopically. Activates the nuclear factor kappa-B (NF-kappa-B) transcription factor. Promotes anchorage-independent growth of immortalized melanocytes and astrocytes which is a key component in tumor cell expansion. Promotes lung metastasis and also has an effect on bone and brain metastasis, possibly by enhancing the seeding of tumor cells to the target organ endothelium. Induces chemoresistance. The polypeptide is Protein LYRIC (MTDH) (Homo sapiens (Human)).